A 715-amino-acid chain; its full sequence is Fatty acid oxidation complex subunit alpha (715 aa).

An enoyl-CoA hydratase region spans residues 1–194; sequence MHEQRAKPSA…RLGLVDDAVP (194 aa). Residues 310 to 715 are 3-hydroxyacyl-CoA dehydrogenase; the sequence is HALHRIGILG…QGERFYPQGS (406 aa).

This sequence in the N-terminal section; belongs to the enoyl-CoA hydratase/isomerase family. In the central section; belongs to the 3-hydroxyacyl-CoA dehydrogenase family. Heterotetramer of two alpha chains (FadJ) and two beta chains (FadI).

It is found in the cytoplasm. It catalyses the reaction a (3S)-3-hydroxyacyl-CoA = a (2E)-enoyl-CoA + H2O. The catalysed reaction is a 4-saturated-(3S)-3-hydroxyacyl-CoA = a (3E)-enoyl-CoA + H2O. The enzyme catalyses a (3S)-3-hydroxyacyl-CoA + NAD(+) = a 3-oxoacyl-CoA + NADH + H(+). It carries out the reaction (3S)-3-hydroxybutanoyl-CoA = (3R)-3-hydroxybutanoyl-CoA. It functions in the pathway lipid metabolism; fatty acid beta-oxidation. Functionally, catalyzes the formation of a hydroxyacyl-CoA by addition of water on enoyl-CoA. Also exhibits 3-hydroxyacyl-CoA epimerase and 3-hydroxyacyl-CoA dehydrogenase activities. This chain is Fatty acid oxidation complex subunit alpha, found in Serratia proteamaculans (strain 568).